The following is a 264-amino-acid chain: MQQYLDLMKHILAEGVDKSDRTGTGTRSVFGYQMRFDLSKGFPLVTTKKCHMRSIIHELLWFLKGDTNIAYLRENKVSIWDEWADENGDLGPVYGAQWRSWPTQSGDAIDQIAQVIAQIKSQPDSRRLIVSAWNVGELDKMALAPCHAFFQFYVADGKLSCQLYQRSCDVFLGLPFNIASYALLTMMVAQQCDLALGDFVWTGGDTHLYSNHMEQTALQLSREPRQLPTMTILRKPASIFDYQFEDFELTHYDPHPHIKAPVAV.

R21 lines the dUMP pocket. H51 is a (6R)-5,10-methylene-5,6,7,8-tetrahydrofolate binding site. 126–127 is a binding site for dUMP; the sequence is RR. C146 functions as the Nucleophile in the catalytic mechanism. DUMP contacts are provided by residues 166 to 169, N177, and 207 to 209; these read RSCD and HLY. D169 is a (6R)-5,10-methylene-5,6,7,8-tetrahydrofolate binding site. Position 263 (A263) interacts with (6R)-5,10-methylene-5,6,7,8-tetrahydrofolate.

This sequence belongs to the thymidylate synthase family. Bacterial-type ThyA subfamily. Homodimer.

The protein resides in the cytoplasm. The catalysed reaction is dUMP + (6R)-5,10-methylene-5,6,7,8-tetrahydrofolate = 7,8-dihydrofolate + dTMP. The protein operates within pyrimidine metabolism; dTTP biosynthesis. Its function is as follows. Catalyzes the reductive methylation of 2'-deoxyuridine-5'-monophosphate (dUMP) to 2'-deoxythymidine-5'-monophosphate (dTMP) while utilizing 5,10-methylenetetrahydrofolate (mTHF) as the methyl donor and reductant in the reaction, yielding dihydrofolate (DHF) as a by-product. This enzymatic reaction provides an intracellular de novo source of dTMP, an essential precursor for DNA biosynthesis. This chain is Thymidylate synthase, found in Shewanella sp. (strain ANA-3).